The primary structure comprises 184 residues: MKVIAVTGYKPFELGIFKNDHPGVECIKKALRRKLTAFVEGGLEWVIISGQLGVELWTAEVVFEIQVEYPDLKLAVFTPFLEQEEGWKEDNREYYEFILSQADHVDSITKRKYESPEQFKLKNQIFIEKSDALLAVYDEEKPGSPKYIVEAAKKKGEIENYHSYFILFSDLQDIIEEEQWNNAE.

The protein belongs to the UPF0398 family.

The protein is UPF0398 protein BAA_1648 of Bacillus anthracis (strain A0248).